Here is a 175-residue protein sequence, read N- to C-terminus: Isopentenyl-diphosphate Delta-isomerase (175 aa).

Mn(2+)-binding residues include histidine 22 and histidine 29. The Nudix hydrolase domain maps to 27–160 (KLHRAFSVLL…PAAYTPWLAE (134 aa)). Cysteine 64 is an active-site residue. Mg(2+) is bound at residue cysteine 64. Histidine 66 serves as a coordination point for Mn(2+). Glutamate 84 provides a ligand contact to Mg(2+). Residues glutamate 110 and glutamate 112 each contribute to the Mn(2+) site. Glutamate 112 is a catalytic residue.

This sequence belongs to the IPP isomerase type 1 family. Mg(2+) is required as a cofactor. Requires Mn(2+) as cofactor.

Its subcellular location is the cytoplasm. The enzyme catalyses isopentenyl diphosphate = dimethylallyl diphosphate. Its pathway is isoprenoid biosynthesis; dimethylallyl diphosphate biosynthesis; dimethylallyl diphosphate from isopentenyl diphosphate: step 1/1. In terms of biological role, catalyzes the 1,3-allylic rearrangement of the homoallylic substrate isopentenyl (IPP) to its highly electrophilic allylic isomer, dimethylallyl diphosphate (DMAPP). This Nocardia farcinica (strain IFM 10152) protein is Isopentenyl-diphosphate Delta-isomerase.